Consider the following 133-residue polypeptide: Large-conductance mechanosensitive channel (133 aa).

The next 2 helical transmembrane spans lie at 14–34 (VIDL…VSSL) and 67–87 (GNFI…FMFV).

The protein belongs to the MscL family. Homopentamer.

It localises to the cell membrane. Its function is as follows. Channel that opens in response to stretch forces in the membrane lipid bilayer. May participate in the regulation of osmotic pressure changes within the cell. This is Large-conductance mechanosensitive channel from Bacillus mycoides (strain KBAB4) (Bacillus weihenstephanensis).